Consider the following 209-residue polypeptide: Guanylate kinase (209 aa).

Residues 9–188 (GIMLVISSPS…SVYQIKCIFT (180 aa)) form the Guanylate kinase-like domain. 16-23 (SPSGGGKT) is an ATP binding site.

It belongs to the guanylate kinase family.

The protein localises to the cytoplasm. The enzyme catalyses GMP + ATP = GDP + ADP. In terms of biological role, essential for recycling GMP and indirectly, cGMP. In Ehrlichia chaffeensis (strain ATCC CRL-10679 / Arkansas), this protein is Guanylate kinase.